We begin with the raw amino-acid sequence, 593 residues long: Progranulin (593 aa).

An N-terminal signal peptide occupies residues 1–17 (MWTLVSWVALTAGLVAG). N-linked (GlcNAc...) asparagine glycosylation is present at Asn118. Cystine bridges form between Cys126–Cys139 and Cys133–Cys149. N-linked (GlcNAc...) asparagine glycans are attached at residues Asn236 and Asn265. 10 disulfides stabilise this stretch: Cys284–Cys296, Cys290–Cys306, Cys297–Cys314, Cys307–Cys321, Cys315–Cys328, Cys322–Cys335, Cys366–Cys378, Cys372–Cys388, Cys397–Cys410, and Cys404–Cys416. Asn368 is a glycosylation site (N-linked (GlcNAc...) asparagine). The N-linked (GlcNAc...) asparagine glycan is linked to Asn530.

Belongs to the granulin family. As to quaternary structure, progranulin is secreted as a homodimer. Interacts with SLPI; interaction protects progranulin from proteolysis. Interacts (via region corresponding to granulin-7 peptide) with CTSD; stabilizes CTSD and increases its proteolytic activity. Interacts (via region corresponding to granulin-7 peptide) with SORT1; this interaction mediates endocytosis and lysosome delivery of progranulin; interaction occurs at the neuronal cell surface in a stressed nervous system. Interacts with PSAP; facilitates lysosomal delivery of progranulin from the extracellular space and the biosynthetic pathway. Forms a complex with PSAP and M6PR; PSAP bridges the binding between progranulin and M6PR. Forms a complex with PSAP and SORT1; progranulin bridges the interaction between PSAP and SORT1; facilitates lysosomal targeting of PSAP via SORT1; interaction enhances PSAP uptake in primary cortical neurons. Interacts (via regions corresponding to granulin-2 and granulin-7 peptides) with GBA1; this interaction prevents aggregation of GBA1-SCARB2 complex via interaction with HSPA1A upon stress. Interacts (via region corresponding to granulin-7 peptide) with HSPA1A; mediates recruitment of HSPA1A to GBA1 and prevents GBA1 aggregation in response to stress. Post-translationally, cleaved by ELANE; proteolysis is blocked by SLPI and is concentration- and time-dependent and induces CXCL8/IL-8 production; granulin-3 and granulin-4 are resistant to ELANE. Cleaved by CTSL in lysosome thus regulating the maturation and turnover of progranulin within the lysosome. As to expression, in myelogenous leukemic cell lines of promonocytic, promyelocytic, and proerythroid lineage, in fibroblasts, and very strongly in epithelial cell lines. Present in inflammatory cells and bone marrow. Highest levels in kidney.

It is found in the secreted. The protein localises to the lysosome. Functionally, secreted protein that acts as a key regulator of lysosomal function and as a growth factor involved in inflammation, wound healing and cell proliferation. Regulates protein trafficking to lysosomes, and also the activity of lysosomal enzymes. Also facilitates the acidification of lysosomes, causing degradation of mature CTSD by CTSB. In addition, functions as a wound-related growth factor that acts directly on dermal fibroblasts and endothelial cells to promote division, migration and the formation of capillary-like tubule structures. Also promotes epithelial cell proliferation by blocking TNF-mediated neutrophil activation preventing release of oxidants and proteases. Moreover, modulates inflammation in neurons by preserving neurons survival, axonal outgrowth and neuronal integrity. Promotes proliferation of the epithelial cell line A431 in culture. In terms of biological role, inhibits epithelial cell proliferation and induces epithelial cells to secrete IL-8. Its function is as follows. Stabilizes CTSD through interaction with CTSD leading to maintain its aspartic-type peptidase activity. The polypeptide is Progranulin (Homo sapiens (Human)).